The sequence spans 66 residues: Clarkitoxin-I-Mdum (66 aa).

4 disulfide bridges follow: Cys-3–Cys-24, Cys-17–Cys-42, Cys-46–Cys-59, and Cys-60–Cys-65.

Expressed by the venom gland.

The protein localises to the secreted. Its function is as follows. No toxicity is observed upon intravenous or intracerebroventricular injection into mice. Has no cytotoxic activity towards C2C12 cells at 100 ug/ml. This is Clarkitoxin-I-Mdum from Micrurus dumerilii (Coral snake).